We begin with the raw amino-acid sequence, 425 residues long: Enolase (425 aa).

Gln-163 serves as a coordination point for (2R)-2-phosphoglycerate. The Proton donor role is filled by Glu-205. Residues Asp-242, Glu-285, and Asp-312 each contribute to the Mg(2+) site. Residues Lys-337, Arg-366, Ser-367, and Lys-388 each coordinate (2R)-2-phosphoglycerate. Lys-337 acts as the Proton acceptor in catalysis.

Belongs to the enolase family. Mg(2+) serves as cofactor.

The protein localises to the cytoplasm. The protein resides in the secreted. Its subcellular location is the cell surface. It catalyses the reaction (2R)-2-phosphoglycerate = phosphoenolpyruvate + H2O. The protein operates within carbohydrate degradation; glycolysis; pyruvate from D-glyceraldehyde 3-phosphate: step 4/5. Its function is as follows. Catalyzes the reversible conversion of 2-phosphoglycerate (2-PG) into phosphoenolpyruvate (PEP). It is essential for the degradation of carbohydrates via glycolysis. In Ruegeria pomeroyi (strain ATCC 700808 / DSM 15171 / DSS-3) (Silicibacter pomeroyi), this protein is Enolase.